Consider the following 433-residue polypeptide: Enolase (433 aa).

A (2R)-2-phosphoglycerate-binding site is contributed by Q167. E209 acts as the Proton donor in catalysis. Mg(2+) is bound by residues D246, E291, and D318. (2R)-2-phosphoglycerate-binding residues include K343, R372, S373, and K394. K343 acts as the Proton acceptor in catalysis.

This sequence belongs to the enolase family. As to quaternary structure, component of the RNA degradosome, a multiprotein complex involved in RNA processing and mRNA degradation. It depends on Mg(2+) as a cofactor.

It is found in the cytoplasm. The protein localises to the secreted. The protein resides in the cell surface. It carries out the reaction (2R)-2-phosphoglycerate = phosphoenolpyruvate + H2O. The protein operates within carbohydrate degradation; glycolysis; pyruvate from D-glyceraldehyde 3-phosphate: step 4/5. Catalyzes the reversible conversion of 2-phosphoglycerate (2-PG) into phosphoenolpyruvate (PEP). It is essential for the degradation of carbohydrates via glycolysis. This Tolumonas auensis (strain DSM 9187 / NBRC 110442 / TA 4) protein is Enolase.